Here is a 121-residue protein sequence, read N- to C-terminus: Large ribosomal subunit protein bL20 (121 aa).

This sequence belongs to the bacterial ribosomal protein bL20 family.

Binds directly to 23S ribosomal RNA and is necessary for the in vitro assembly process of the 50S ribosomal subunit. It is not involved in the protein synthesizing functions of that subunit. This chain is Large ribosomal subunit protein bL20, found in Moorella thermoacetica (strain ATCC 39073 / JCM 9320).